We begin with the raw amino-acid sequence, 157 residues long: Probable succinate transporter subunit YjjB (157 aa).

The next 4 helical transmembrane spans lie at 2–22, 55–75, 87–107, and 129–149; these read GIIS…IPAV, AGFN…SIGI, IFTV…TAMI, and FLKA…PGLW.

Belongs to the ThrE exporter (TC 2.A.79) family. The transporter is composed of YjjB and YjjP.

It localises to the cell inner membrane. Its function is as follows. Involved in succinate export with YjjP. Both proteins are required for export. The sequence is that of Probable succinate transporter subunit YjjB from Klebsiella pneumoniae subsp. pneumoniae (strain ATCC 700721 / MGH 78578).